We begin with the raw amino-acid sequence, 387 residues long: ATP phosphoribosyltransferase regulatory subunit (387 aa).

Belongs to the class-II aminoacyl-tRNA synthetase family. HisZ subfamily. In terms of assembly, heteromultimer composed of HisG and HisZ subunits.

The protein resides in the cytoplasm. Its pathway is amino-acid biosynthesis; L-histidine biosynthesis; L-histidine from 5-phospho-alpha-D-ribose 1-diphosphate: step 1/9. Its function is as follows. Required for the first step of histidine biosynthesis. May allow the feedback regulation of ATP phosphoribosyltransferase activity by histidine. The chain is ATP phosphoribosyltransferase regulatory subunit from Polynucleobacter asymbioticus (strain DSM 18221 / CIP 109841 / QLW-P1DMWA-1) (Polynucleobacter necessarius subsp. asymbioticus).